Here is a 314-residue protein sequence, read N- to C-terminus: 4-hydroxy-3-methylbut-2-enyl diphosphate reductase (314 aa).

Position 12 (cysteine 12) interacts with [4Fe-4S] cluster. Residues histidine 41 and histidine 74 each contribute to the (2E)-4-hydroxy-3-methylbut-2-enyl diphosphate site. Dimethylallyl diphosphate-binding residues include histidine 41 and histidine 74. The isopentenyl diphosphate site is built by histidine 41 and histidine 74. Cysteine 96 lines the [4Fe-4S] cluster pocket. Histidine 124 provides a ligand contact to (2E)-4-hydroxy-3-methylbut-2-enyl diphosphate. Histidine 124 lines the dimethylallyl diphosphate pocket. Histidine 124 contacts isopentenyl diphosphate. The active-site Proton donor is the glutamate 126. Threonine 167 contacts (2E)-4-hydroxy-3-methylbut-2-enyl diphosphate. Residue cysteine 197 coordinates [4Fe-4S] cluster. Residues serine 225, serine 226, asparagine 227, and serine 269 each contribute to the (2E)-4-hydroxy-3-methylbut-2-enyl diphosphate site. Residues serine 225, serine 226, asparagine 227, and serine 269 each coordinate dimethylallyl diphosphate. Residues serine 225, serine 226, asparagine 227, and serine 269 each contribute to the isopentenyl diphosphate site.

The protein belongs to the IspH family. [4Fe-4S] cluster serves as cofactor.

The catalysed reaction is isopentenyl diphosphate + 2 oxidized [2Fe-2S]-[ferredoxin] + H2O = (2E)-4-hydroxy-3-methylbut-2-enyl diphosphate + 2 reduced [2Fe-2S]-[ferredoxin] + 2 H(+). The enzyme catalyses dimethylallyl diphosphate + 2 oxidized [2Fe-2S]-[ferredoxin] + H2O = (2E)-4-hydroxy-3-methylbut-2-enyl diphosphate + 2 reduced [2Fe-2S]-[ferredoxin] + 2 H(+). It functions in the pathway isoprenoid biosynthesis; dimethylallyl diphosphate biosynthesis; dimethylallyl diphosphate from (2E)-4-hydroxy-3-methylbutenyl diphosphate: step 1/1. It participates in isoprenoid biosynthesis; isopentenyl diphosphate biosynthesis via DXP pathway; isopentenyl diphosphate from 1-deoxy-D-xylulose 5-phosphate: step 6/6. Its function is as follows. Catalyzes the conversion of 1-hydroxy-2-methyl-2-(E)-butenyl 4-diphosphate (HMBPP) into a mixture of isopentenyl diphosphate (IPP) and dimethylallyl diphosphate (DMAPP). Acts in the terminal step of the DOXP/MEP pathway for isoprenoid precursor biosynthesis. This chain is 4-hydroxy-3-methylbut-2-enyl diphosphate reductase, found in Psychromonas ingrahamii (strain DSM 17664 / CCUG 51855 / 37).